Reading from the N-terminus, the 395-residue chain is Pyridinium-3,5-bisthiocarboxylic acid mononucleotide nickel insertion protein (395 aa).

It belongs to the LarC family.

It catalyses the reaction Ni(II)-pyridinium-3,5-bisthiocarboxylate mononucleotide = pyridinium-3,5-bisthiocarboxylate mononucleotide + Ni(2+). In terms of biological role, involved in the biosynthesis of a nickel-pincer cofactor ((SCS)Ni(II) pincer complex). Binds Ni(2+), and functions in nickel delivery to pyridinium-3,5-bisthiocarboxylic acid mononucleotide (P2TMN), to form the mature cofactor. Is thus probably required for the activation of nickel-pincer cofactor-dependent enzymes. In Staphylococcus epidermidis (strain ATCC 35984 / DSM 28319 / BCRC 17069 / CCUG 31568 / BM 3577 / RP62A), this protein is Pyridinium-3,5-bisthiocarboxylic acid mononucleotide nickel insertion protein.